The chain runs to 196 residues: Calcium channel flower (196 aa).

3 consecutive transmembrane segments (helical) span residues 35 to 55, 70 to 92, and 113 to 133; these read LGIV…LSII, LAGF…QVGS, and AVPP…GLIF.

It belongs to the calcium channel flower family. Homomultimer. Associates with the dally/ magu complex.

The protein localises to the cell membrane. It is found in the cytoplasmic vesicle. It localises to the secretory vesicle. The protein resides in the synaptic vesicle membrane. Its subcellular location is the presynaptic cell membrane. The protein localises to the endosome. With respect to regulation, channel activity is inhibited by La(3+), which reduces Ca(2+) influx and thus inhibits it's function in promoting activity-dependent bulk endocytosis (ADBE) in response to high stimuli. In terms of biological role, transmembrane protein which mediates synaptic endocytosis, fitness-based cell culling, neuronal culling, morphogen gradient scaling, and calcium transport. Regulates synaptic endocytosis and hence couples exo- with endocytosis. Controls two major modes of synaptic vesicle (SV) endocytosis in the synaptic boutons of neuromuscular junctions (NMJs); Ca(2+) channel-independent Clathrin-mediated endocytosis (CME) in response to mild stimulation, and Ca(2+) channel-dependent activity-dependent bulk endocytosis (ADBE) in response to strong stimulation. Functions in ADBE and subsequent SV reformation from bulk endosomes by initiating Ca(2+) channel-dependent phosphatidylinositol 4,5-bisphosphate (PtdIns(4,5)P2) compartmentalization in synaptic boutons. There it acts at the periactive zone to provide the low Ca(2+) levels required to initiate Calcineurin activation and upregulate PtdIns(4,5)P2. Conversely PtdIns(4,5)P2 enhances fwe Ca(2+) channel-activity, establishing a positive feedback loop that induces PtdIns(4,5)P2 microdomain at the periactive zone. These microdomains trigger bulk membrane invagination (i.e. ADBE) by triggering actin polymerization while also promoting localization of fwe to bulk endosomes, thereby removing the ADBE trigger to reduce endocytosis and prevent excess membrane uptake. PtdIns(4,5)P2 then promotes SV reformation from the bulk endosomes, to coordinate ADBE and subsequent SV reformation. Different combinations of the flower isoforms at the cell membrane are also required for the identification and elimination of suboptimal or supernumerary cells during development, regeneration, and adulthood. Required for the recognition and elimination of unfit cells in the developing wing during cell competition. In the developing pupal retina, mediates the elimination of unwanted postmitotic neurons, including supernumerary photoreceptor neurons that form at the periphery of the retina and are contained within incomplete ommatidia units. Also required for efficient elimination and replacement of old neurons by newly generated neurons during regeneration in the adult brain following mechanical injury. Downstream of the flower fitness fingerprints, cells identified as unwanted or unfit are eliminated via apoptosis through the expression of ahuizotl (azot). However, the cells marked for elimination by the flower isoforms only undergo apoptosis if additional thresholds are met; (1) their neighboring fit/healthy cells express different levels of the fwe isoforms, and (2) the levels of the protective signal SPARC expressed by the loser or unwanted cells are unable to inhibit caspase activation. These additional thresholds for flower-mediated apoptosis, allows useful cells to recover from transient and limited stress before they are unnecessarily eliminated. Functions with dally and magu in a mechanism of scaling, which utilises apoptosis to ensure that the dpp morphogen gradient, which mediates organ growth, remains proportional to the size of the growing wing. In this mechanism, fwe represses dally- and Magu-dependent activity in expanding the gradient, and dally/Magu inhibits fwe-dependent apoptosis to keep cell death rate low. When the levels of these different proteins are optimally regulated the gradient correctly scales with organ growth but when this fails, fwe-mediated apoptosis is activated to trim the developing tissue to match the correct size of the gradient. In Drosophila grimshawi (Hawaiian fruit fly), this protein is Calcium channel flower.